Consider the following 177-residue polypeptide: Ribosome maturation factor RimM (177 aa).

The PRC barrel domain occupies 104–177 (GVDGIWADLI…IIKVKLMEGM (74 aa)).

Belongs to the RimM family. As to quaternary structure, binds ribosomal protein uS19.

The protein resides in the cytoplasm. Its function is as follows. An accessory protein needed during the final step in the assembly of 30S ribosomal subunit, possibly for assembly of the head region. Essential for efficient processing of 16S rRNA. May be needed both before and after RbfA during the maturation of 16S rRNA. It has affinity for free ribosomal 30S subunits but not for 70S ribosomes. The protein is Ribosome maturation factor RimM of Magnetococcus marinus (strain ATCC BAA-1437 / JCM 17883 / MC-1).